The following is a 222-amino-acid chain: Collectrin (222 aa).

The first 14 residues, 1–14, serve as a signal peptide directing secretion; it reads MLWALFFLVTTIHA. Residues 15–141 are Extracellular-facing; the sequence is ELCHPDAENA…LAPPMEPSVP (127 aa). The region spanning 21–222 is the Collectrin-like domain; that stretch reads AENAFKVRLS…LTEDERLTPL (202 aa). N-linked (GlcNAc...) asparagine glycosylation is found at N76 and N93. A helical transmembrane segment spans residues 142-162; it reads VWIIVFGVIFCIVTVAIALLV. Residues 163–222 lie on the Cytoplasmic side of the membrane; that stretch reads LSGIRQRRRNNKGPPGVEDAEDKCENIITIENGIPCDPLDMKGGHINDGFLTEDERLTPL. 2 positions are modified to phosphothreonine: T214 and T220.

The protein belongs to the CLTRN family. Monomer. Homodimer. Homodimer; dimerization prevents CLTRN cleavage by BACE2. Interacts with SNAPIN. Interacts with SLC6A18; this interaction regulates the trafficking of SLC6A18 to the cell membrane and its amino acid transporter activity. Interacts with SLC6A19; this interaction regulates the trafficking of SLC6A19 to the cell membrane and its amino acid transporter activity. Interacts with SLC6A20B. In terms of processing, glycosylated. Glycosylation is required for plasma membrane localization and for its cleavage by BACE2. Proteolytically processed in pancreatic beta cells by BACE2 leading to the generation and extracellular release of soluble CLTRN, and a corresponding cell-associated C-terminal fragment which is later cleaved by gamma-secretase. This shedding process inactivates CLTRN. Three cleavage sites have been identified for BACE2, two clustered sites after Phe-116 and Leu-118 and a more membrane proximal site at Phe-125; the preferred BACE2 cleavage site seems to be between Phe-125 and Leu-126, Phe-116 and Leu-118 act as alternative sites. Expressed on the apical surface of the proximal tubules in the renal cortex (at protein level). Kidney; collecting ducts and proximal tubule. Pancreas; beta cells of islets. Expressed in the cerebral cortex, hippocampus, brainstem and cerebellum.

Its subcellular location is the cell membrane. Plays an important role in amino acid transport by acting as binding partner of amino acid transporters SLC6A18 and SLC6A19, regulating their trafficking on the cell surface and their activity. May also play a role in trafficking of amino acid transporters SLC3A1 and SLC7A9 to the renal cortical cell membrane. Regulator of SNARE complex function. Stimulator of beta cell replication. The protein is Collectrin of Mus musculus (Mouse).